The chain runs to 967 residues: Haze protective factor 1 (967 aa).

Positions 1–23 (MFNRFNKLQAALALVLYSQSALG) are cleaved as a signal peptide. N-linked (GlcNAc...) asparagine glycosylation is found at asparagine 28 and asparagine 35. Residues 72-301 (SSSTEVSSSI…STSSASTASG (230 aa)) are disordered. 9 repeat units span residues 93-105 (SITSSGSSVSGSS), 106-118 (SITSSGSSVSSSS), 119-131 (SATESGSSASGSS), 132-144 (SATESGSSVSGSS), 153-165 (SATESGSSVSGST), 166-178 (SATESGSSASGSS), 179-191 (SATESGSSASGSS), 192-204 (SATESGSSVSGSS), and 205-217 (SATESGSSVSGSS). A 13 X approximate repeats, Ser-rich region spans residues 93 to 278 (SITSSGSSVS…QSGSSVSGSS (186 aa)). One copy of the 1-10; approximate repeat lies at 218 to 230 (SATESGSASSVPS). One copy of the 1-11; approximate repeat lies at 234–247 (SVTESGSSSSASES). One copy of the 1-12; approximate repeat lies at 248-259 (SITQSGTASGSS). The 1-13 repeat unit spans residues 266 to 278 (SVTQSGSSVSGSS). Residues asparagine 493, asparagine 601, and asparagine 638 are each glycosylated (N-linked (GlcNAc...) asparagine). A run of 4 repeats spans residues 745-780 (SSKSYTTVTVTHCDNNGCNTKTVTSECPEETSATTT), 781-815 (SPKSYTTVTVTHCDDNGCNTKTVTSEAPEATTTTV), 816-854 (SPKTYTTATVTQCDDNGCSTKTVTSEAPKETSETSETSA), and 855-893 (APKTYTTATVTQCDDNGCNVKIITSQIPEATSTVTATSA). The tract at residues 745 to 902 (SSKSYTTVTV…ASPKSYTTVT (158 aa)) is 4.5 X approximate tandem repeats, Thr-rich. The disordered stretch occupies residues 836 to 857 (KTVTSEAPKETSETSETSAAPK). One copy of the 2-5; truncated repeat lies at 894-902 (SPKSYTTVT). Residue alanine 946 is the site of GPI-anchor amidated alanine attachment. Residues 947 to 967 (AGLNANTLNALVGIFVLAFFN) constitute a propeptide, removed in mature form.

The protein belongs to the SRP1/TIP1 family. In terms of processing, the GPI-anchor is attached to the protein in the endoplasmic reticulum and serves to target the protein to the cell surface. There, the glucosamine-inositol phospholipid moiety is cleaved off and the GPI-modified mannoprotein is covalently attached via its lipidless GPI glycan remnant to the 1,6-beta-glucan of the outer cell wall layer.

Its subcellular location is the secreted. The protein resides in the cell wall. It is found in the membrane. Involved in cell wall organization and biosynthesis. In Saccharomyces cerevisiae (strain ATCC 204508 / S288c) (Baker's yeast), this protein is Haze protective factor 1 (HPF1).